The following is a 243-amino-acid chain: Ribosomal RNA small subunit methyltransferase G (243 aa).

Residues G79, F84, A130 to E131, and R150 each bind S-adenosyl-L-methionine. Residues E219–K243 form a disordered region.

It belongs to the methyltransferase superfamily. RNA methyltransferase RsmG family.

The protein resides in the cytoplasm. In terms of biological role, specifically methylates the N7 position of a guanine in 16S rRNA. The chain is Ribosomal RNA small subunit methyltransferase G from Pediococcus pentosaceus (strain ATCC 25745 / CCUG 21536 / LMG 10740 / 183-1w).